The sequence spans 255 residues: H-2 class II histocompatibility antigen, E-D alpha chain (255 aa).

The signal sequence occupies residues 1–25 (MATIGALVLRFFFIAVLMSSQKSWA). The alpha-1 stretch occupies residues 26–109 (IKEEHTIIQA…ERSNNTPDAN (84 aa)). Topologically, residues 26 to 216 (IKEEHTIIQA…EKTLLPETKE (191 aa)) are extracellular. Positions 110 to 203 (VAPEVTVLSR…GLEEPLRKTW (94 aa)) are alpha-2. The region spanning 112 to 204 (PEVTVLSRSP…LEEPLRKTWE (93 aa)) is the Ig-like C1-type domain. Cysteine 132 and cysteine 188 are disulfide-bonded. N-linked (GlcNAc...) asparagine glycosylation is present at asparagine 143. A connecting peptide region spans residues 204 to 216 (EFEEKTLLPETKE). Residues 217–242 (NVMCALGLFVGLVGIVVGIILIMKGI) traverse the membrane as a helical segment. Topologically, residues 243 to 255 (KKRNVVERRQGAL) are cytoplasmic.

It belongs to the MHC class II family.

It localises to the membrane. The chain is H-2 class II histocompatibility antigen, E-D alpha chain (H2-Ea) from Mus musculus (Mouse).